We begin with the raw amino-acid sequence, 432 residues long: E3 ubiquitin-protein ligase ATL42 (432 aa).

Residues methionine 1–alanine 18 form the signal peptide. Residues leucine 37 to tyrosine 57 traverse the membrane as a helical segment. The RING-type; atypical zinc finger occupies cysteine 123–arginine 165.

It belongs to the RING-type zinc finger family. ATL subfamily.

The protein localises to the membrane. It carries out the reaction S-ubiquitinyl-[E2 ubiquitin-conjugating enzyme]-L-cysteine + [acceptor protein]-L-lysine = [E2 ubiquitin-conjugating enzyme]-L-cysteine + N(6)-ubiquitinyl-[acceptor protein]-L-lysine.. The protein operates within protein modification; protein ubiquitination. In terms of biological role, E3 ubiquitin-protein ligase able to catalyze polyubiquitination with ubiquitin-conjugating enzyme E2 UBC8 in vitro. The sequence is that of E3 ubiquitin-protein ligase ATL42 (ATL42) from Arabidopsis thaliana (Mouse-ear cress).